Reading from the N-terminus, the 98-residue chain is uncharacterized protein (98 aa).

Transmembrane regions (helical) follow at residues leucine 13–phenylalanine 33 and isoleucine 65–serine 85.

It localises to the membrane. This is an uncharacterized protein from Saccharomyces cerevisiae (strain ATCC 204508 / S288c) (Baker's yeast).